The following is a 241-amino-acid chain: ATP synthase subunit a (241 aa).

The next 8 membrane-spanning stretches (helical) occupy residues asparagine 29 to isoleucine 49, valine 54 to isoleucine 74, isoleucine 86 to proline 106, histidine 114 to phenylalanine 134, tryptophan 153 to leucine 173, leucine 177 to asparagine 197, isoleucine 200 to valine 220, and alanine 221 to lysine 241.

Belongs to the ATPase A chain family. In terms of assembly, F-type ATPases have 2 components, CF(1) - the catalytic core - and CF(0) - the membrane proton channel. CF(1) has five subunits: alpha(3), beta(3), gamma(1), delta(1), epsilon(1). CF(0) has three main subunits: a(1), b(2) and c(9-12). The alpha and beta chains form an alternating ring which encloses part of the gamma chain. CF(1) is attached to CF(0) by a central stalk formed by the gamma and epsilon chains, while a peripheral stalk is formed by the delta and b chains.

It is found in the cell membrane. Key component of the proton channel; it plays a direct role in the translocation of protons across the membrane. This is ATP synthase subunit a from Wolbachia pipientis wMel.